Here is a 340-residue protein sequence, read N- to C-terminus: Pre-mRNA-splicing factor cwf17 (340 aa).

7 WD repeats span residues 48-87 (GHTAEVLVARFDPSGSYFASGGMDRQILLWNVFGDVKNYG), 91-130 (GCKGAITDLQWSRDSRVVYCSSSDTHLMSWDAVSGQKIRK), 133-173 (GHAG…CIKT), 175-214 (EEKYPLTAVAIAQQGTQVFIGGIDGAIKIWDLRNNHCSHV), 217-256 (GHKDIITSLAISKDGSSLLSNSMDNTVRIFDVKPFASAQR), 267-306 (GQEHNLLGVAWSRNSRFVGAGSSDKNVYVWSATGDLRYVL), and 308-339 (GHEGSVNHVDFHPHQDIILSCSSDRTIFLGEL).

In terms of assembly, belongs to the 40S cdc5-associated complex (or cwf complex), a spliceosome sub-complex reminiscent of a late-stage spliceosome composed of the U2, U5 and U6 snRNAs and at least brr2, cdc5, cwf2/prp3, cwf3/syf1, cwf4/syf3, cwf5/ecm2, spp42/cwf6, cwf7/spf27, cwf8, cwf9, cwf10, cwf11, cwf12, prp45/cwf13, cwf14, cwf15, cwf16, cwf17, cwf18, cwf19, cwf20, cwf21, cwf22, cwf23, cwf24, cwf25, cwf26, cyp7/cwf27, cwf28, cwf29/ist3, lea1, msl1, prp5/cwf1, prp10, prp12/sap130, prp17, prp22, sap61, sap62, sap114, sap145, slu7, smb1, smd1, smd3, smf1, smg1 and syf2.

It localises to the nucleus. Functionally, involved in mRNA splicing where it associates with cdc5 and the other cwf proteins as part of the spliceosome. This chain is Pre-mRNA-splicing factor cwf17 (cwf17), found in Schizosaccharomyces pombe (strain 972 / ATCC 24843) (Fission yeast).